A 200-amino-acid chain; its full sequence is Putative HMP/thiamine-binding protein YkoF (200 aa).

Thiamine-binding residues include Leu-17 and Thr-49.

Homodimer in vitro. In vivo, may be a part of an ABC transporter complex which is composed of two ATP-binding proteins (YkoD), two transmembrane proteins (YkoC and YkoE) and a solute-binding protein (YkoF).

In terms of biological role, part of the ABC transporter complex YkoCDEF that could transport hydroxymethylpyrimidine (HMP) and/or thiamine. Could also transport other HMP-containing products. Binds thiamine via its HMP moiety. The chain is Putative HMP/thiamine-binding protein YkoF (ykoF) from Bacillus subtilis (strain 168).